Consider the following 206-residue polypeptide: Octanoyltransferase (206 aa).

A BPL/LPL catalytic domain is found at 30–206 (PETNDEIWLV…EFVTLLNNSI (177 aa)). Residues 69 to 76 (RGGQVTYH), 137 to 139 (SLG), and 150 to 152 (GIA) each bind substrate. The active-site Acyl-thioester intermediate is C168.

It belongs to the LipB family.

The protein resides in the cytoplasm. The enzyme catalyses octanoyl-[ACP] + L-lysyl-[protein] = N(6)-octanoyl-L-lysyl-[protein] + holo-[ACP] + H(+). It participates in protein modification; protein lipoylation via endogenous pathway; protein N(6)-(lipoyl)lysine from octanoyl-[acyl-carrier-protein]: step 1/2. In terms of biological role, catalyzes the transfer of endogenously produced octanoic acid from octanoyl-acyl-carrier-protein onto the lipoyl domains of lipoate-dependent enzymes. Lipoyl-ACP can also act as a substrate although octanoyl-ACP is likely to be the physiological substrate. This Francisella tularensis subsp. novicida (strain U112) protein is Octanoyltransferase.